A 1221-amino-acid chain; its full sequence is Fibulin-2 (1221 aa).

The signal sequence occupies residues 1-26 (MLLQESAGVWLALALVTALTPSPSMA). Residues 27 to 176 (VPWQDCTGAE…ELICYQLPGC (150 aa)) are subdomain NA (Cys-rich). The tract at residues 27–434 (VPWQDCTGAE…DGSTKDLIET (408 aa)) is n. Positions 177–434 (HGNFSDAEEG…DGSTKDLIET (258 aa)) are subdomain NB (Cys-free). An N-linked (GlcNAc...) asparagine glycan is attached at N179. Disordered regions lie at residues 248–329 (PTAA…LIPD) and 341–399 (GAAP…PQHP). Positions 270–283 (DTEEDEEEEEEETL) are enriched in acidic residues. The segment covering 312-322 (QEKEAEAKAGP) has biased composition (basic and acidic residues). The Cell attachment site motif lies at 421–423 (RGD). Cystine bridges form between C435/C462, C436/C469, C449/C470, C479/C508, C492/C509, C511/C535, C512/C542, C525/C543, C598/C610, C606/C619, and C621/C634. 3 Anaphylatoxin-like domains span residues 435 to 477 (CCAA…LKEK), 478 to 510 (SCVA…QCCD), and 511 to 543 (CCGL…LSCC). N-linked (GlcNAc...) asparagine glycosylation is present at N497. The region spanning 594-635 (DQDECLMLPGELCQHLCINTVGSYRCACFPGFELQGDGRTCR) is the EGF-like 1; calcium-binding domain. A disordered region spans residues 633-661 (TCRPDRGAPQLDTARESAPRSESAQVSPN). The segment covering 652–661 (RSESAQVSPN) has biased composition (polar residues). An EGF-like 2 domain is found at 669 to 708 (QPNTCKDNGPCRQVCRVVGDTAMCSCFPGYAIMADGVSCE). 5 cysteine pairs are disulfide-bonded: C673-C683, C679-C692, C694-C707, C713-C726, and C720-C735. The region spanning 709–755 (DQDECLMGTHDCSWKQFCVNTLGSFYCVNHTVLCAEGYILNAHRKCV) is the EGF-like 3; calcium-binding domain. N737 is a glycosylation site (N-linked (GlcNAc...) asparagine). A disulfide bridge links C742 with C754. The 45-residue stretch at 756–800 (DINECVTDLHTCTRAEHCVNTPGSFQCYKALTCEPGYVLTDGECT) folds into the EGF-like 4; calcium-binding domain. The 46-residue stretch at 801–846 (DVDECVTGTHNCQAGFSCQNTKGSFYCQARQRCMDGFLQDPEGNCV) folds into the EGF-like 5; calcium-binding domain. Cystine bridges form between C805-C818, C812-C827, and C833-C845. Residues 847–894 (DINECTSLLEPCRSGFSCINTVGSYTCQRNPLVCGRGYHANEEGSECV) enclose the EGF-like 6; calcium-binding domain. The EGF-like 7; calcium-binding domain maps to 895–937 (DVNECETGVHRCGEGQLCYNLPGSYRCDCKPGFQRDAFGRTCI). 15 disulfides stabilise this stretch: C899/C912, C906/C921, C923/C936, C942/C954, C950/C963, C965/C978, C984/C993, C989/C1002, C1004/C1017, C1023/C1035, C1031/C1044, C1046/C1060, C1066/C1079, C1073/C1088, and C1093/C1105. One can recognise an EGF-like 8; calcium-binding domain in the interval 938 to 979 (DVNECWVSPGRLCQHTCENTPGSYRCSCAAGFLLAADGKHCE). Residues 980–1018 (DVNECETRRCSQECANIYGSYQCYCRQGYQLAEDGHTCT) form the EGF-like 9; calcium-binding domain. Residues 1019–1061 (DIDECAQGAGILCTFRCVNVPGSYQCACPEQGYTMMANGRSCK) enclose the EGF-like 10; calcium-binding domain. The EGF-like 11; calcium-binding domain occupies 1062 to 1106 (DLDECALGTHNCSEAETCHNIQGSFRCLRFDCPPNYVRVSETKCE). N1072 carries N-linked (GlcNAc...) asparagine glycosylation. The domain III stretch occupies residues 1111-1221 (QDITECQTSP…MYIFFTTFAP (111 aa)).

It belongs to the fibulin family. As to quaternary structure, homotrimer; disulfide-linked. Interacts with LAMA2. Interacts with FBN1 (via N-terminal domain). Forms a ternary complex with ELN and FBN1. In terms of tissue distribution, component of both basement membranes and other connective tissues.

Its subcellular location is the secreted. The protein localises to the extracellular space. It is found in the extracellular matrix. In terms of biological role, its binding to fibronectin and some other ligands is calcium dependent. May act as an adapter that mediates the interaction between FBN1 and ELN. This is Fibulin-2 (Fbln2) from Mus musculus (Mouse).